The sequence spans 776 residues: MEIPFGSCLYSCLALLVLLPSLSLAQYESWPYQLQYPEYFQQPPPEHHQHQVPSDVVKIQVRLAGQKRKHNEGRVEVYYEGQWGTVCDDDFSIHAAHVVCREVGYVEAKSWTASSSYGPGEGPIWLDNIYCTGKESTLAACSSNGWGVTDCKHPEDVGVVCSEKRIPGFKFDNSLINQIESLNIQVEDIRIRPILSAFRHRKPVTEGYVEVKEGKAWKQICDKHWTAKNSHVVCGMFGFPAEKTYNPKAYKTFASRRKLRYWKFSMNCTGTEAHISSCKLGPPMFRDPVKNATCENGQPAVVSCVPSQIFSPDGPSRFRKAYKPEQPLVRLRGGAQVGEGRVEVLKNGEWGTVCDDKWDLVSASVVCRELGFGTAKEAVTGSRLGQGIGPIHLNEVQCTGTEKSIIDCKLNTESQGCNHEEDAGVRCNIPIMGFQKKVRLNGGRNPYEGRVEVLTERNGSLVWGNVCGQNWGIVEAMVVCRQLGLGFASNAFQETWYWHGNIFANKVIMSGVKCSGTELSLAHCRHDEEVVCPEGGVQYGAGVACSETAPDLVLNAEIVQQTAYLEDRPMALLQCAMEENCLSASAVHTDPTRGHRRLLRFSSQIHNNGQSDFRPKNGRHAWIWHDCHRHYHSMEVFTYYDLLSLNGTKVAEGHKASFCLEDTECEGDIQKSYECANFGEQGITMGCWDMYRHDIDCQWIDITDVPPGDYLFQVVINPNYEVPESDFSNNIMKCRSRYDGYRIWMYNCHVGGAFSEETEQKFEHFSGLLNNQLSVQ.

The N-terminal stretch at 1 to 25 is a signal peptide; sequence MEIPFGSCLYSCLALLVLLPSLSLA. SRCR domains lie at 61-162, 191-305, 329-428, and 438-546; these read VRLA…VVCS, IRPI…VSCV, VRLR…VRCN, and VRLN…VACS. 9 cysteine pairs are disulfide-bonded: Cys-87–Cys-151, Cys-100–Cys-161, Cys-131–Cys-141, Cys-221–Cys-294, Cys-234–Cys-304, Cys-268–Cys-278, Cys-354–Cys-417, Cys-367–Cys-427, and Cys-398–Cys-408. The N-linked (GlcNAc...) asparagine glycan is linked to Asn-267. A glycan (N-linked (GlcNAc...) asparagine) is linked at Asn-291. The N-linked (GlcNAc...) asparagine glycan is linked to Asn-458. 3 disulfide bridges follow: Cys-467–Cys-532, Cys-480–Cys-545, and Cys-514–Cys-524. A lysyl-oxidase like region spans residues 550–753; that stretch reads PDLVLNAEIV…WMYNCHVGGA (204 aa). Residues Asp-551 and Leu-552 each coordinate Ca(2+). Intrachain disulfides connect Cys-575-Cys-627, Cys-581-Cys-697, Cys-659-Cys-675, and Cys-665-Cys-687. 3 residues coordinate Cu cation: His-628, His-630, and His-632. An N-linked (GlcNAc...) asparagine glycan is attached at Asn-646. Positions 655 to 691 form a cross-link, lysine tyrosylquinone (Lys-Tyr); that stretch reads KASFCLEDTECEGDIQKSYECANFGEQGITMGCWDMY. Position 691 is a 2',4',5'-topaquinone (Tyr-691). Residues Glu-724, Asp-726, Asn-729, and Asn-730 each coordinate Ca(2+). A disulfide bridge connects residues Cys-734 and Cys-748.

The protein belongs to the lysyl oxidase family. Component of some chromatin repressor complex. Interacts with SNAI1. Interacts with TAF10. Interacts with HSPA5. Interacts with EFEMP2. The cofactor is Cu cation. It depends on lysine tyrosylquinone residue as a cofactor. The lysine tyrosylquinone cross-link (LTQ) is generated by condensation of the epsilon-amino group of a lysine with a topaquinone produced by oxidation of tyrosine. In terms of processing, N-glycosylated. N-glycosylation on Asn-458 and Asn-646 may be essential for proper folding and secretion; may be composed of a fucosylated carbohydrates attached to a trimannose N-linked glycan core.

The protein resides in the secreted. It localises to the extracellular space. Its subcellular location is the extracellular matrix. It is found in the basement membrane. The protein localises to the nucleus. The protein resides in the chromosome. It localises to the endoplasmic reticulum. The catalysed reaction is L-lysyl-[protein] + O2 + H2O = (S)-2-amino-6-oxohexanoyl-[protein] + H2O2 + NH4(+). With respect to regulation, specifically inhibited by a mouse monoclonal antibody AB0023, inhibition occurs in a non-competitive manner. Functionally, mediates the post-translational oxidative deamination of lysine residues on target proteins leading to the formation of deaminated lysine (allysine). Acts as a transcription corepressor and specifically mediates deamination of trimethylated 'Lys-4' of histone H3 (H3K4me3), a specific tag for epigenetic transcriptional activation. Shows no activity against histone H3 when it is trimethylated on 'Lys-9' (H3K9me3) or 'Lys-27' (H3K27me3) or when 'Lys-4' is monomethylated (H3K4me1) or dimethylated (H3K4me2). Also mediates deamination of methylated TAF10, a member of the transcription factor IID (TFIID) complex, which induces release of TAF10 from promoters, leading to inhibition of TFIID-dependent transcription. LOXL2-mediated deamination of TAF10 results in transcriptional repression of genes required for embryonic stem cell pluripotency including POU5F1/OCT4, NANOG, KLF4 and SOX2. Involved in epithelial to mesenchymal transition (EMT) via interaction with SNAI1 and participates in repression of E-cadherin CDH1, probably by mediating deamination of histone H3. During EMT, involved with SNAI1 in negatively regulating pericentromeric heterochromatin transcription. SNAI1 recruits LOXL2 to pericentromeric regions to oxidize histone H3 and repress transcription which leads to release of heterochromatin component CBX5/HP1A, enabling chromatin reorganization and acquisition of mesenchymal traits. Interacts with the endoplasmic reticulum protein HSPA5 which activates the IRE1-XBP1 pathway of the unfolded protein response, leading to expression of several transcription factors involved in EMT and subsequent EMT induction. When secreted into the extracellular matrix, promotes cross-linking of extracellular matrix proteins by mediating oxidative deamination of peptidyl lysine residues in precursors to fibrous collagen and elastin. Acts as a regulator of sprouting angiogenesis, probably via collagen IV scaffolding. Acts as a regulator of chondrocyte differentiation, probably by regulating expression of factors that control chondrocyte differentiation. This is Lysyl oxidase homolog 2 (Loxl2) from Rattus norvegicus (Rat).